A 334-amino-acid chain; its full sequence is Ornithine carbamoyltransferase subunit I (334 aa).

Carbamoyl phosphate is bound by residues 56 to 59, Gln-83, Arg-107, and 134 to 137; these read STRT and HPTQ. L-ornithine-binding positions include Asn-168, Asp-232, and 236-237; that span reads SM. Cys-274 is a Zn(2+) binding site. Carbamoyl phosphate-binding positions include 274–275 and Arg-320; that span reads CL.

This sequence belongs to the aspartate/ornithine carbamoyltransferase superfamily. OTCase family. As to quaternary structure, in E.coli strain K12, trimer of identical or non-identical chains are composed of ArgI (I) and/or ArgF (F). The trimer has the following composition: FFI, FFF, FII, III. E.coli strains B and W, which are known to contain only ArgI, produce only a trimer of identical chains (III).

It localises to the cytoplasm. It carries out the reaction carbamoyl phosphate + L-ornithine = L-citrulline + phosphate + H(+). Its pathway is amino-acid biosynthesis; L-arginine biosynthesis; L-arginine from L-ornithine and carbamoyl phosphate: step 1/3. Its activity is regulated as follows. Reversely inhibited by N-(N-Sulfodiaminophosphinyl)-L-ornithine. Zinc is an allosteric regulator of the substrate-bound enzyme and a competitive inhibitor of the free enzyme. Reversibly catalyzes the transfer of the carbamoyl group from carbamoyl phosphate (CP) to the N(epsilon) atom of ornithine (ORN) to produce L-citrulline, which is a substrate for argininosuccinate synthetase, the enzyme involved in the final step in arginine biosynthesis. This is Ornithine carbamoyltransferase subunit I from Escherichia coli (strain K12).